A 368-amino-acid polypeptide reads, in one-letter code: Methylthioribose-1-phosphate isomerase (368 aa).

Substrate-binding positions include 54 to 56 (RGA), Arg-91, and Gln-204. Residue Asp-245 is the Proton donor of the active site. 255-256 (NK) lines the substrate pocket.

Belongs to the eIF-2B alpha/beta/delta subunits family. MtnA subfamily.

The enzyme catalyses 5-(methylsulfanyl)-alpha-D-ribose 1-phosphate = 5-(methylsulfanyl)-D-ribulose 1-phosphate. The protein operates within amino-acid biosynthesis; L-methionine biosynthesis via salvage pathway; L-methionine from S-methyl-5-thio-alpha-D-ribose 1-phosphate: step 1/6. Catalyzes the interconversion of methylthioribose-1-phosphate (MTR-1-P) into methylthioribulose-1-phosphate (MTRu-1-P). This is Methylthioribose-1-phosphate isomerase from Gluconobacter oxydans (strain 621H) (Gluconobacter suboxydans).